Consider the following 744-residue polypeptide: Endonuclease MutS2 (744 aa).

315 to 322 (GPNMGGKT) lines the ATP pocket. One can recognise a Smr domain in the interval 668-743 (VDLRGLTVAE…GHGVTVVALR (76 aa)).

Belongs to the DNA mismatch repair MutS family. MutS2 subfamily. In terms of assembly, homodimer. Interacts with MutL. Binds to stalled ribosomes, contacting rRNA.

Nuclease activity is stimulated by interaction with MutL. ATPase activity is stimulated by dsDNA. Its function is as follows. Endonuclease that is involved in the suppression of homologous recombination and may thus have a key role in the control of bacterial genetic diversity. Cleaves the phosphate backbone of oligodeoxynucleotides non-sequence-specifically at the 3' side of the phosphates. Preferably incises the branched DNA structures, especially the D-loop structure over the Holliday junction. Has ATPase activity. Binds to dsDNA but not to ssDNA. Acts as a ribosome collision sensor, splitting the ribosome into its 2 subunits. Detects stalled/collided 70S ribosomes which it binds and splits by an ATP-hydrolysis driven conformational change. Acts upstream of the ribosome quality control system (RQC), a ribosome-associated complex that mediates the extraction of incompletely synthesized nascent chains from stalled ribosomes and their subsequent degradation. Probably generates substrates for RQC. This Thermus thermophilus (strain ATCC 27634 / DSM 579 / HB8) protein is Endonuclease MutS2.